Here is a 211-residue protein sequence, read N- to C-terminus: tRNA (guanine-N(7)-)-methyltransferase (211 aa).

S-adenosyl-L-methionine is bound by residues glutamate 44, aspartate 69, aspartate 96, and aspartate 118. Aspartate 118 is an active-site residue. Lysine 122 provides a ligand contact to substrate. The interaction with RNA stretch occupies residues 124–129 (RHEKRR). Residues aspartate 154 and 191-194 (TEYE) contribute to the substrate site.

It belongs to the class I-like SAM-binding methyltransferase superfamily. TrmB family.

The catalysed reaction is guanosine(46) in tRNA + S-adenosyl-L-methionine = N(7)-methylguanosine(46) in tRNA + S-adenosyl-L-homocysteine. The protein operates within tRNA modification; N(7)-methylguanine-tRNA biosynthesis. Catalyzes the formation of N(7)-methylguanine at position 46 (m7G46) in tRNA. The sequence is that of tRNA (guanine-N(7)-)-methyltransferase from Streptococcus pneumoniae (strain Taiwan19F-14).